Consider the following 485-residue polypeptide: Adenosylhomocysteinase (485 aa).

Substrate-binding residues include Thr-64, Asp-139, and Glu-205. 206–208 (TTT) serves as a coordination point for NAD(+). Residues Lys-235 and Asp-239 each contribute to the substrate site. Residues Asn-240, 269 to 274 (GYGDVG), Glu-292, Asn-327, 348 to 350 (IGH), and Asn-397 contribute to the NAD(+) site.

The protein belongs to the adenosylhomocysteinase family. Requires NAD(+) as cofactor.

It catalyses the reaction S-adenosyl-L-homocysteine + H2O = L-homocysteine + adenosine. It participates in amino-acid biosynthesis; L-homocysteine biosynthesis; L-homocysteine from S-adenosyl-L-homocysteine: step 1/1. In terms of biological role, adenosylhomocysteine is a competitive inhibitor of S-adenosyl-L-methionine-dependent methyl transferase reactions; therefore adenosylhomocysteinase may play a key role in the control of methylations via regulation of the intracellular concentration of adenosylhomocysteine. This Nicotiana sylvestris (Wood tobacco) protein is Adenosylhomocysteinase (SAHH).